The sequence spans 447 residues: Elongation factor 1-alpha (447 aa).

The 226-residue stretch at 5-230 (KVHINIVVIG…DNINEPKRPS (226 aa)) folds into the tr-type G domain. The tract at residues 14-21 (GHVDSGKS) is G1. GTP is bound at residue 14–21 (GHVDSGKS). Lys-55 is subject to N6,N6-dimethyllysine. Positions 70 to 74 (GITID) are G2. Lys-79 is subject to N6,N6,N6-trimethyllysine. The interval 91 to 94 (DAPG) is G3. GTP contacts are provided by residues 91-95 (DAPGH) and 153-156 (NKMD). Residues 153-156 (NKMD) form a G4 region. Residue Lys-187 is modified to N6,N6,N6-trimethyllysine. The segment at 194–196 (SGF) is G5. Lys-261 bears the N6-methyllysine mark. Glu-289 carries the 5-glutamyl glycerylphosphorylethanolamine modification. Position 306 is an N6,N6,N6-trimethyllysine (Lys-306). A 5-glutamyl glycerylphosphorylethanolamine modification is found at Glu-362. Lys-396 is modified (N6,N6,N6-trimethyllysine).

Belongs to the TRAFAC class translation factor GTPase superfamily. Classic translation factor GTPase family. EF-Tu/EF-1A subfamily.

Its subcellular location is the cytoplasm. In terms of biological role, this protein promotes the GTP-dependent binding of aminoacyl-tRNA to the A-site of ribosomes during protein biosynthesis. This Pisum sativum (Garden pea) protein is Elongation factor 1-alpha.